The sequence spans 367 residues: MNVVDLLMKLLSFKSVTPDDAGSLAFIESYLKGYEATYVNKEGVKNLFLTKKFSEGPHLCFAGHVDVVPAGDGWHTNPFVPVIKEGKIYARGTQDMKSGVAAFVQAVKECEDFSGRLSILLTSDEEGDATYGTQIMLQHLKEIDLLPDACIVAEPTCETAFGDAIKVGRRGSVNGVIEKHGIQGHAAYPEKAKNPIHKVAQVLPMMAGVNLDEGDEFFGPSQFVITDLRAGMEVTNVTPGKLKMMFNVRNSTETTLEDVEKFVHTYFNGMDYDLTLKQSATPFLTDPDRPIVHALDESIQKVCGITPKHSTAGGTSDARFIAADNIDVIEFGVINDTIHAPNERTSIEEVEKLYEVFKETIKYFTQG.

H64 contributes to the Zn(2+) binding site. The active site involves D66. D95 contributes to the Zn(2+) binding site. E125 acts as the Proton acceptor in catalysis. Residues E126, E154, and H339 each coordinate Zn(2+).

It belongs to the peptidase M20A family. DapE subfamily. Homodimer. Zn(2+) serves as cofactor. Requires Co(2+) as cofactor.

The catalysed reaction is N-succinyl-(2S,6S)-2,6-diaminopimelate + H2O = (2S,6S)-2,6-diaminopimelate + succinate. Its pathway is amino-acid biosynthesis; L-lysine biosynthesis via DAP pathway; LL-2,6-diaminopimelate from (S)-tetrahydrodipicolinate (succinylase route): step 3/3. Functionally, catalyzes the hydrolysis of N-succinyl-L,L-diaminopimelic acid (SDAP), forming succinate and LL-2,6-diaminopimelate (DAP), an intermediate involved in the bacterial biosynthesis of lysine and meso-diaminopimelic acid, an essential component of bacterial cell walls. This chain is Succinyl-diaminopimelate desuccinylase, found in Sulfurovum sp. (strain NBC37-1).